The primary structure comprises 1314 residues: E3 ubiquitin-protein ligase RNF123 (1314 aa).

Ala-2 is subject to N-acetylalanine. The B30.2/SPRY domain occupies Val-74–Leu-254. Position 675 is a phosphoserine (Ser-675). Position 683 is an asymmetric dimethylarginine (Arg-683). Residues Trp-968–Trp-974 form an interaction with NFKB1 region. Residues Cys-1254, Cys-1257, Cys-1269, His-1271, Cys-1274, Cys-1277, Cys-1288, and Cys-1291 each contribute to the Zn(2+) site. The RING-type zinc finger occupies Cys-1254–Lys-1292.

Component of the KPC complex composed of RNF123/KPC1 and UBAC1/KPC2. Interacts with UBAC1 and CDKN1B via its N-terminal domain. Interacts with RIGI (via N-terminus) and IFIH1 (via N-terminus). Ubiquitinated, leading to its degradation. Deubiquitinated by USP19, thereby stimulating CDKN1B ubiquitin-dependent degradation.

It localises to the cytoplasm. The enzyme catalyses S-ubiquitinyl-[E2 ubiquitin-conjugating enzyme]-L-cysteine + [acceptor protein]-L-lysine = [E2 ubiquitin-conjugating enzyme]-L-cysteine + N(6)-ubiquitinyl-[acceptor protein]-L-lysine.. Its pathway is protein modification; protein ubiquitination. In terms of biological role, catalytic subunit of the KPC complex that acts as E3 ubiquitin-protein ligase. Promotes the ubiquitination and proteasome-mediated degradation of CDKN1B which is the cyclin-dependent kinase inhibitor at the G0-G1 transition of the cell cycle. Also acts as a key regulator of the NF-kappa-B signaling by promoting maturation of the NFKB1 component of NF-kappa-B: acts by catalyzing ubiquitination of the NFKB1 p105 precursor, leading to limited proteasomal degradation of NFKB1 p105 and generation of the active NFKB1 p50 subunit. Also functions as an inhibitor of innate antiviral signaling mediated by RIGI and IFIH1 independently of its E3 ligase activity. Interacts with the N-terminal CARD domains of RIGI and IFIH1 and competes with the downstream adapter MAVS. The sequence is that of E3 ubiquitin-protein ligase RNF123 from Homo sapiens (Human).